Here is a 158-residue protein sequence, read N- to C-terminus: MAIDGILKQGFITTSADKFINWAKTGSMWPMTFGLACCAVEMMHAGAARYDLDQFGIIFRPSPRQSDLMIVAGTLCNKMGPALRKVYDQMPEPRWVVSMGSCANGGGYYHYSYSVVRGCDRIVPVDVYVPGCPPTAEALVYGLLQMQNKIRLTNTIAR.

Residues Cys-37, Cys-38, Cys-102, and Cys-132 each coordinate [4Fe-4S] cluster.

This sequence belongs to the complex I 20 kDa subunit family. In terms of assembly, NDH-1 is composed of 14 different subunits. Subunits NuoB, C, D, E, F, and G constitute the peripheral sector of the complex. It depends on [4Fe-4S] cluster as a cofactor.

It is found in the cell inner membrane. The enzyme catalyses a quinone + NADH + 5 H(+)(in) = a quinol + NAD(+) + 4 H(+)(out). Its function is as follows. NDH-1 shuttles electrons from NADH, via FMN and iron-sulfur (Fe-S) centers, to quinones in the respiratory chain. Couples the redox reaction to proton translocation (for every two electrons transferred, four hydrogen ions are translocated across the cytoplasmic membrane), and thus conserves the redox energy in a proton gradient. The protein is NADH-quinone oxidoreductase subunit B of Bordetella avium (strain 197N).